We begin with the raw amino-acid sequence, 152 residues long: Deoxyuridine 5'-triphosphate nucleotidohydrolase (152 aa).

Substrate-binding positions include 71-73 (RSG), Asn-84, 88-90 (LID), and Met-98.

This sequence belongs to the dUTPase family. Mg(2+) serves as cofactor.

The catalysed reaction is dUTP + H2O = dUMP + diphosphate + H(+). It participates in pyrimidine metabolism; dUMP biosynthesis; dUMP from dCTP (dUTP route): step 2/2. Functionally, this enzyme is involved in nucleotide metabolism: it produces dUMP, the immediate precursor of thymidine nucleotides and it decreases the intracellular concentration of dUTP so that uracil cannot be incorporated into DNA. The protein is Deoxyuridine 5'-triphosphate nucleotidohydrolase of Shewanella sp. (strain MR-7).